Reading from the N-terminus, the 436-residue chain is DNA primase DnaG (436 aa).

In terms of domain architecture, Toprim spans Asp-169–Tyr-243. The Mg(2+) site is built by Glu-175, Asp-217, and Asp-219.

This sequence belongs to the archaeal DnaG primase family. Forms a ternary complex with MCM helicase and DNA. It depends on Mg(2+) as a cofactor.

The catalysed reaction is ssDNA + n NTP = ssDNA/pppN(pN)n-1 hybrid + (n-1) diphosphate.. In terms of biological role, RNA polymerase that catalyzes the synthesis of short RNA molecules used as primers for DNA polymerase during DNA replication. This is DNA primase DnaG from Methanococcus maripaludis (strain DSM 14266 / JCM 13030 / NBRC 101832 / S2 / LL).